The following is a 440-amino-acid chain: Polycomb group protein VERNALIZATION 2 (440 aa).

The segment at 86 to 111 (EDCSCPFCSMLCGSFKGLQFHLNSSH) adopts a C2H2-type zinc-finger fold. Residues 156-163 (KPRKRRQR) carry the Nuclear localization signal motif. The segment at 267 to 345 (RQFYHSHRVQ…GHISWACEVF (79 aa)) is VEFS-box. The tract at residues 398 to 440 (NNNNNSVDHPSDSNTNNNNIVDHPNDIKNKNNVDNKDNNSRDK) is disordered. Basic and acidic residues predominate over residues 420 to 440 (HPNDIKNKNNVDNKDNNSRDK).

This sequence belongs to the VEFS (VRN2-EMF2-FIS2-SU(Z)12) family. As to quaternary structure, probable component of a PcG complex. In plants, PcG complexes are probably composed of a member of the EZ family (CLF or MEA), FIE, and a member of the VEFS family (FIS2, VRN2 or EMF2). Component of the plant homeodomain / polycomb repressive complex 2 (PHD-PRC2) large complex during prolonged cold, composed of core PRC2 components (VRN2, EZA1, FIE and MSI1), and three related PHD finger proteins (VIL1, VIL2 and VIN3) that mediates histone H3 trimethylation on 'Lys-27' (H3K27me3). Binds to ALP1. In terms of tissue distribution, weakly expressed. Expressed both during, and in the absence of vernalization.

The protein resides in the nucleus. Its function is as follows. Polycomb group (PcG) protein. Plays a central role in vernalization by maintaining repressed the homeotic gene FLC, a floral repressor, after a cold treatment. PcG proteins act by forming multiprotein complexes, which are required to maintain the transcriptionally repressive state of homeotic genes throughout development. PcG proteins are not required to initiate repression, but to maintain it during later stages of development. They probably act via the methylation of histones, rendering chromatin heritably changed in its expressibility. Associates constitutively along the whole FLC locus. The polypeptide is Polycomb group protein VERNALIZATION 2 (VRN2) (Arabidopsis thaliana (Mouse-ear cress)).